A 515-amino-acid polypeptide reads, in one-letter code: Probable cytosol aminopeptidase (515 aa).

The Mn(2+) site is built by K279 and D284. The active site involves K291. The Mn(2+) site is built by D302, D361, and E363. R365 is a catalytic residue.

The protein belongs to the peptidase M17 family. It depends on Mn(2+) as a cofactor.

The protein localises to the cytoplasm. It catalyses the reaction Release of an N-terminal amino acid, Xaa-|-Yaa-, in which Xaa is preferably Leu, but may be other amino acids including Pro although not Arg or Lys, and Yaa may be Pro. Amino acid amides and methyl esters are also readily hydrolyzed, but rates on arylamides are exceedingly low.. The catalysed reaction is Release of an N-terminal amino acid, preferentially leucine, but not glutamic or aspartic acids.. In terms of biological role, presumably involved in the processing and regular turnover of intracellular proteins. Catalyzes the removal of unsubstituted N-terminal amino acids from various peptides. This chain is Probable cytosol aminopeptidase, found in Mycobacterium bovis (strain ATCC BAA-935 / AF2122/97).